We begin with the raw amino-acid sequence, 803 residues long: Palmitoyl thioesterase CPT1C (803 aa).

The Cytoplasmic portion of the chain corresponds to 1-52; that stretch reads MAEAHQAVGFRPSLTSDGAEVELSAPVLQEIYLSGLRSWKRHLSRFWNDFLT. Residues 53–75 form a helical membrane-spanning segment; that stretch reads GVFPASPLSWLFLFSAIQLAWFL. The Lumenal segment spans residues 76–103; sequence QLDPSLGLMEKIKELLPDWGGQHHGLRG. Residues 104-126 form a helical membrane-spanning segment; it reads VLAAALFASCLWGALIFTLHVAL. Residues 127–803 are Cytoplasmic-facing; it reads RLLLSYHGWL…SKASMTSTDF (677 aa). H470 functions as the Proton acceptor in the catalytic mechanism. Position 552 to 564 (552 to 564) interacts with CoA; the sequence is GKSFIRRCHLSSD. Y586, S588, and T599 together coordinate (R)-carnitine. The interval 761–803 is required for interaction with GRIA1; sequence LFQAGQHFKRRFRGSGKENSRHRCGFLSRQTGASKASMTSTDF. Residues 772–803 form a disordered region; it reads FRGSGKENSRHRCGFLSRQTGASKASMTSTDF. Residues 788 to 803 are compositionally biased toward polar residues; it reads SRQTGASKASMTSTDF.

Belongs to the carnitine/choline acetyltransferase family. In terms of assembly, peripherally associated with AMPAR complex. AMPAR complex consists of an inner core made of 4 pore-forming GluA/GRIA proteins (GRIA1, GRIA2, GRIA3 and GRIA4) and 4 major auxiliary subunits arranged in a twofold symmetry. One of the two pairs of distinct binding sites is occupied either by CNIH2, CNIH3 or CACNG2, CACNG3. The other harbors CACNG2, CACNG3, CACNG4, CACNG8 or GSG1L. This inner core of AMPAR complex is complemented by outer core constituents binding directly to the GluA/GRIA proteins at sites distinct from the interaction sites of the inner core constituents. Outer core constituents include at least PRRT1, PRRT2, CKAMP44/SHISA9, FRRS1L and NRN1. The proteins of the inner and outer core serve as a platform for other, more peripherally associated AMPAR constituents, including CPT1C. Alone or in combination, these auxiliary subunits control the gating and pharmacology of the AMPAR complex and profoundly impact their biogenesis and protein processing. Interacts with SACM1L; the interaction regulates SACM1L phosphatidylinositol-3-phosphatase activity and translocation to endoplasmic reticulum/trans Golgi network in a malonyl-CoA dependent manner. Interacts with ATL1. As to expression, expressed predominantly in brain and testis. Expressed in motor neurons.

The protein localises to the cell projection. It is found in the dendrite. The protein resides in the axon. Its subcellular location is the endoplasmic reticulum membrane. The catalysed reaction is S-hexadecanoyl-L-cysteinyl-[protein] + H2O = L-cysteinyl-[protein] + hexadecanoate + H(+). Palmitoyl thioesterase specifically expressed in the endoplasmic reticulum of neurons. Modulates the trafficking of the glutamate receptor, AMPAR, to plasma membrane through depalmitoylation of GRIA1. Also regulates AMPR trafficking through the regulation of SACM1L phosphatidylinositol-3-phosphatase activity by interaction in a malonyl-CoA dependent manner. Binds malonyl-CoA and couples malonyl-CoA to ceramide levels, necessary for proper spine maturation and contributing to systemic energy homeostasis and appetite control. Binds to palmitoyl-CoA, but does not have carnitine palmitoyltransferase 1 catalytic activity or at very low levels. This is Palmitoyl thioesterase CPT1C from Homo sapiens (Human).